Here is a 329-residue protein sequence, read N- to C-terminus: Intradiol ring-cleavage dioxygenase hqdA (329 aa).

Y167, Y201, H225, and H227 together coordinate Fe cation.

This sequence belongs to the intradiol ring-cleavage dioxygenase family. As to quaternary structure, homodimer. It depends on Fe(3+) as a cofactor.

It carries out the reaction catechol + O2 = cis,cis-muconate + 2 H(+). The catalysed reaction is benzene-1,2,4-triol + O2 = maleylacetate + 2 H(+). Its function is as follows. Intradiol ring-cleavage dioxygenase involved in an alternative pathway to the protocatechuic acid pathway since it is active on hydroxyquinol and catechol but not on protocatechuic acid. The protein is Intradiol ring-cleavage dioxygenase hqdA of Aspergillus niger (strain ATCC MYA-4892 / CBS 513.88 / FGSC A1513).